The sequence spans 839 residues: Periplasmic nitrate reductase (839 aa).

Positions 1-34 form a signal peptide, tat-type signal; the sequence is MTLTRRDFIKANAAAAAATAAAVNLPLVPSMAQA. The 57-residue stretch at 46–102 folds into the 4Fe-4S Mo/W bis-MGD-type domain; sequence IKWDKAACRFCGTGCSVLVGTKGGRVVATQGDPDAPVNRGLNCIKGYFLSKIMYGED. Positions 53, 56, 60, and 88 each coordinate [4Fe-4S] cluster. Residues K90, Q157, N182, C186, 219–226, 250–254, 269–271, M379, Q383, N489, 515–516, K538, D565, and 729–738 contribute to the Mo-bis(molybdopterin guanine dinucleotide) site; these read WGSNMAEM, STYEH, QTD, SD, and TGRVLEHWHT. F805 contributes to the substrate binding site. The Mo-bis(molybdopterin guanine dinucleotide) site is built by N813 and K830.

It belongs to the prokaryotic molybdopterin-containing oxidoreductase family. NasA/NapA/NarB subfamily. Component of the periplasmic nitrate reductase NapAB complex composed of NapA and NapB. Requires [4Fe-4S] cluster as cofactor. Mo-bis(molybdopterin guanine dinucleotide) serves as cofactor. Post-translationally, predicted to be exported by the Tat system. The position of the signal peptide cleavage has not been experimentally proven.

It is found in the periplasm. The catalysed reaction is 2 Fe(II)-[cytochrome] + nitrate + 2 H(+) = 2 Fe(III)-[cytochrome] + nitrite + H2O. In terms of biological role, catalytic subunit of the periplasmic nitrate reductase complex NapAB. Receives electrons from NapB and catalyzes the reduction of nitrate to nitrite. The polypeptide is Periplasmic nitrate reductase (Laribacter hongkongensis (strain HLHK9)).